Consider the following 251-residue polypeptide: 2,3-bisphosphoglycerate-dependent phosphoglycerate mutase (251 aa).

Residues 11 to 18 (RHGNSDWN), 24 to 25 (TG), R63, 90 to 93 (ERHY), K101, 117 to 118 (RR), and 185 to 186 (GN) each bind substrate. Residue H12 is the Tele-phosphohistidine intermediate of the active site. Residue E90 is the Proton donor/acceptor of the active site.

It belongs to the phosphoglycerate mutase family. BPG-dependent PGAM subfamily.

It carries out the reaction (2R)-2-phosphoglycerate = (2R)-3-phosphoglycerate. Its pathway is carbohydrate degradation; glycolysis; pyruvate from D-glyceraldehyde 3-phosphate: step 3/5. Functionally, catalyzes the interconversion of 2-phosphoglycerate and 3-phosphoglycerate. This is 2,3-bisphosphoglycerate-dependent phosphoglycerate mutase from Clavibacter sepedonicus (Clavibacter michiganensis subsp. sepedonicus).